The sequence spans 428 residues: Dihydroorotase (428 aa).

Residues His-59 and His-61 each contribute to the Zn(2+) site. Residues 61 to 63 and Asn-93 contribute to the substrate site; that span reads HLR. Zn(2+)-binding residues include Asp-151, His-178, and His-231. Asn-277 is a binding site for substrate. Position 304 (Asp-304) interacts with Zn(2+). Residue Asp-304 is part of the active site. Substrate-binding positions include His-308 and 322 to 323; that span reads FG.

The protein belongs to the metallo-dependent hydrolases superfamily. DHOase family. Class I DHOase subfamily. It depends on Zn(2+) as a cofactor.

The catalysed reaction is (S)-dihydroorotate + H2O = N-carbamoyl-L-aspartate + H(+). The protein operates within pyrimidine metabolism; UMP biosynthesis via de novo pathway; (S)-dihydroorotate from bicarbonate: step 3/3. In terms of biological role, catalyzes the reversible cyclization of carbamoyl aspartate to dihydroorotate. This Bacillus cereus (strain ATCC 14579 / DSM 31 / CCUG 7414 / JCM 2152 / NBRC 15305 / NCIMB 9373 / NCTC 2599 / NRRL B-3711) protein is Dihydroorotase.